Consider the following 503-residue polypeptide: Maturase K (503 aa).

It belongs to the intron maturase 2 family. MatK subfamily.

The protein localises to the plastid. The protein resides in the chloroplast. Functionally, usually encoded in the trnK tRNA gene intron. Probably assists in splicing its own and other chloroplast group II introns. In Thryptomene saxicola (Rock thryptomene), this protein is Maturase K.